Consider the following 258-residue polypeptide: Sugar fermentation stimulation protein homolog (258 aa).

Belongs to the SfsA family.

In Prochlorococcus marinus (strain NATL2A), this protein is Sugar fermentation stimulation protein homolog.